Here is a 267-residue protein sequence, read N- to C-terminus: MSEVVIICSSSDPASSNIASRLLELAEWDEEGTLRFHRSYCMLCIEGELVGLRNLEDMLDRIGLSPRLIIFASRHISKEAVPWLGGHFTGVVREGSFELSRPAPYALKKLLMALQRHAPSTFRLSAEATHHGPVDLRTPSLFAEIGSCEQHWIDPAAGAAVARAILELESYEAHADETVLLGIGGGHYVQRQTELILSRPVAFGHMFSKYQASMLNVEAIKKAADLSGASGVYLDGKSFRSDERRRLEEIAASLDLNVMGIKEVRSL.

It belongs to the DtdA deacylase family. Monomer. Zn(2+) serves as cofactor.

It catalyses the reaction a D-aminoacyl-tRNA + H2O = a tRNA + a D-alpha-amino acid + H(+). The catalysed reaction is glycyl-tRNA(Ala) + H2O = tRNA(Ala) + glycine + H(+). In terms of biological role, D-aminoacyl-tRNA deacylase with broad substrate specificity. By recycling D-aminoacyl-tRNA to D-amino acids and free tRNA molecules, this enzyme counteracts the toxicity associated with the formation of D-aminoacyl-tRNA entities in vivo. This is D-aminoacyl-tRNA deacylase from Methanothrix thermoacetophila (strain DSM 6194 / JCM 14653 / NBRC 101360 / PT) (Methanosaeta thermophila).